Consider the following 356-residue polypeptide: S-adenosylmethionine:tRNA ribosyltransferase-isomerase (356 aa).

Belongs to the QueA family. In terms of assembly, monomer.

It is found in the cytoplasm. The enzyme catalyses 7-aminomethyl-7-carbaguanosine(34) in tRNA + S-adenosyl-L-methionine = epoxyqueuosine(34) in tRNA + adenine + L-methionine + 2 H(+). Its pathway is tRNA modification; tRNA-queuosine biosynthesis. In terms of biological role, transfers and isomerizes the ribose moiety from AdoMet to the 7-aminomethyl group of 7-deazaguanine (preQ1-tRNA) to give epoxyqueuosine (oQ-tRNA). The sequence is that of S-adenosylmethionine:tRNA ribosyltransferase-isomerase from Escherichia coli (strain 55989 / EAEC).